We begin with the raw amino-acid sequence, 153 residues long: UPF0102 protein Pnap_0271 (153 aa).

The protein belongs to the UPF0102 family.

The polypeptide is UPF0102 protein Pnap_0271 (Polaromonas naphthalenivorans (strain CJ2)).